We begin with the raw amino-acid sequence, 433 residues long: Cyclin-dependent kinase F-3 (433 aa).

A Protein kinase domain is found at 4 to 283 (YKVIREIGDG…AEQSLQHPFF (280 aa)). Residues 10–18 (IGDGTCGNV) and Lys33 each bind ATP. The active-site Proton acceptor is the Asp125. Ser151 is modified (phosphoserine). Thr156 bears the Phosphothreonine mark.

This sequence belongs to the protein kinase superfamily. CMGC Ser/Thr protein kinase family. CDC2/CDKX subfamily.

It catalyses the reaction L-seryl-[protein] + ATP = O-phospho-L-seryl-[protein] + ADP + H(+). The enzyme catalyses L-threonyl-[protein] + ATP = O-phospho-L-threonyl-[protein] + ADP + H(+). The catalysed reaction is [DNA-directed RNA polymerase] + ATP = phospho-[DNA-directed RNA polymerase] + ADP + H(+). The sequence is that of Cyclin-dependent kinase F-3 (CDKF-3) from Oryza sativa subsp. japonica (Rice).